Reading from the N-terminus, the 398-residue chain is NADH-quinone oxidoreductase subunit D (398 aa).

It belongs to the complex I 49 kDa subunit family. NDH-1 is composed of 14 different subunits. Subunits NuoB, C, D, E, F, and G constitute the peripheral sector of the complex.

It is found in the cell inner membrane. It carries out the reaction a quinone + NADH + 5 H(+)(in) = a quinol + NAD(+) + 4 H(+)(out). Its function is as follows. NDH-1 shuttles electrons from NADH, via FMN and iron-sulfur (Fe-S) centers, to quinones in the respiratory chain. The immediate electron acceptor for the enzyme in this species is believed to be ubiquinone. Couples the redox reaction to proton translocation (for every two electrons transferred, four hydrogen ions are translocated across the cytoplasmic membrane), and thus conserves the redox energy in a proton gradient. The protein is NADH-quinone oxidoreductase subunit D of Anaplasma marginale (strain St. Maries).